We begin with the raw amino-acid sequence, 110 residues long: Hydrogenase maturation factor HypA (110 aa).

Ni(2+) is bound at residue histidine 2. 4 residues coordinate Zn(2+): cysteine 70, cysteine 73, cysteine 86, and cysteine 89.

Belongs to the HypA/HybF family.

Its function is as follows. Involved in the maturation of [NiFe] hydrogenases. Required for nickel insertion into the metal center of the hydrogenase. In Geobacter metallireducens (strain ATCC 53774 / DSM 7210 / GS-15), this protein is Hydrogenase maturation factor HypA.